A 108-amino-acid polypeptide reads, in one-letter code: Large ribosomal subunit protein eL32 (108 aa).

Over residues 21 to 30 the composition is skewed to basic residues; that stretch reads RRPRGRTSKM. The segment at 21 to 44 is disordered; that stretch reads RRPRGRTSKMRRYEKGKPAMPAIG.

It belongs to the eukaryotic ribosomal protein eL32 family.

The polypeptide is Large ribosomal subunit protein eL32 (rpl32e) (Methanothermobacter thermautotrophicus (strain ATCC 29096 / DSM 1053 / JCM 10044 / NBRC 100330 / Delta H) (Methanobacterium thermoautotrophicum)).